We begin with the raw amino-acid sequence, 556 residues long: Formate--tetrahydrofolate ligase (556 aa).

65-72 (TPAGEGKS) serves as a coordination point for ATP.

It belongs to the formate--tetrahydrofolate ligase family.

The catalysed reaction is (6S)-5,6,7,8-tetrahydrofolate + formate + ATP = (6R)-10-formyltetrahydrofolate + ADP + phosphate. It participates in one-carbon metabolism; tetrahydrofolate interconversion. In Streptococcus thermophilus (strain ATCC BAA-491 / LMD-9), this protein is Formate--tetrahydrofolate ligase.